We begin with the raw amino-acid sequence, 321 residues long: Viral T-cell receptor beta chain-like T17T-22 (321 aa).

The signal sequence occupies residues 1 to 28; it reads MISWLPSVAMGSRLLCCVALCLLGAGPA. The segment at 29–122 is v segment; sequence DSGLTQTPRH…DSALYLCASS (94 aa). Residue Asn-105 is glycosylated (N-linked (GlcNAc...) asparagine; by host). Positions 123 to 128 are d segment; that stretch reads PNEDSE. The segment at 129–144 is j segment; the sequence is YGETLYFGEGSRLTVV. The segment at 145 to 321 is c region; that stretch reads EDLKKVSPPK…LMAKVKRKDS (177 aa). Residues Asn-214 and Asn-264 are each glycosylated (N-linked (GlcNAc...) asparagine; by host).

The polypeptide is Viral T-cell receptor beta chain-like T17T-22 (V-TCR) (Feline leukemia virus).